A 430-amino-acid chain; its full sequence is UDP-N-acetylglucosamine 1-carboxyvinyltransferase (430 aa).

Residue 22-23 (KN) participates in phosphoenolpyruvate binding. Position 102 (arginine 102) interacts with UDP-N-acetyl-alpha-D-glucosamine. The active-site Proton donor is cysteine 126. Position 126 is a 2-(S-cysteinyl)pyruvic acid O-phosphothioketal (cysteine 126). UDP-N-acetyl-alpha-D-glucosamine contacts are provided by residues 131-135 (RPVDL), 172-175 (KVSV), aspartate 317, and isoleucine 339.

Belongs to the EPSP synthase family. MurA subfamily.

It localises to the cytoplasm. It catalyses the reaction phosphoenolpyruvate + UDP-N-acetyl-alpha-D-glucosamine = UDP-N-acetyl-3-O-(1-carboxyvinyl)-alpha-D-glucosamine + phosphate. Its pathway is cell wall biogenesis; peptidoglycan biosynthesis. Cell wall formation. Adds enolpyruvyl to UDP-N-acetylglucosamine. This is UDP-N-acetylglucosamine 1-carboxyvinyltransferase from Rhizobium johnstonii (strain DSM 114642 / LMG 32736 / 3841) (Rhizobium leguminosarum bv. viciae).